The chain runs to 289 residues: MEGKEEDVRLGANKFSERQPIGTAAQGAADDKDYKEPPPAPLFEPGELKSWSFYRAGIAEFVATFLFLYITILTVMGVSKSTSKCATVGIQGIAWSFGGMIFALVYCTAGISGGHINPAVTFGLFLARKLSLTRALFYIIMQCLGAVCGAGVVKGFQQGLYMGNGGGANVVAPGYTKGDGLGAEIVGTFILVYTVFSATDAKRNARDSHVPILAPLPIGFAVFLVHLATIPITGTGINPARSLGAAIIYNRDHAWNDHWIFWVGPFIGAALAAIYHQVIIRAIPFKSRS.

A disordered region spans residues 1–36 (MEGKEEDVRLGANKFSERQPIGTAAQGAADDKDYKE). The next 2 membrane-spanning stretches (helical) occupy residues 58–78 (IAEF…VMGV) and 93–115 (IAWS…SGGH). The NPA 1 signature appears at 117–119 (NPA). 3 consecutive transmembrane segments (helical) span residues 136–156 (LFYI…VKGF), 178–198 (GDGL…VFSA), and 212–232 (ILAP…TIPI). The NPA 2 motif lies at 238–240 (NPA). Residues 260-280 (IFWVGPFIGAALAAIYHQVII) form a helical membrane-spanning segment.

This sequence belongs to the MIP/aquaporin (TC 1.A.8) family. PIP (TC 1.A.8.11) subfamily. Interacts with PIP2-1 to form heteromers. In terms of tissue distribution, highly expressed in developing tassels and at lower levels in roots, shoots, ears and embryos. Expressed in the root growing zone at 5-6 mm from the root tip. Expressed in xylem parenchyma.

Its subcellular location is the cell membrane. In terms of biological role, water channel required to facilitate the transport of water across cell membrane. Active as heteromers with PIP1-1, PIP2-1, PIP2-4 or PIP2-5, but not as homomers. This Zea mays (Maize) protein is Aquaporin PIP1-2 (PIP1-2).